We begin with the raw amino-acid sequence, 247 residues long: ATP synthase subunit a, chloroplastic (247 aa).

5 helical membrane passes run 38-58 (QVLI…AIAV), 95-115 (VPFI…GALL), 134-154 (INTT…AGLT), 199-219 (LVVV…VMFL), and 220-240 (GLFT…AYIG).

This sequence belongs to the ATPase A chain family. F-type ATPases have 2 components, CF(1) - the catalytic core - and CF(0) - the membrane proton channel. CF(1) has five subunits: alpha(3), beta(3), gamma(1), delta(1), epsilon(1). CF(0) has four main subunits: a, b, b' and c.

It is found in the plastid. The protein localises to the chloroplast thylakoid membrane. Functionally, key component of the proton channel; it plays a direct role in the translocation of protons across the membrane. In Calycanthus floridus var. glaucus (Eastern sweetshrub), this protein is ATP synthase subunit a, chloroplastic.